The primary structure comprises 413 residues: NAD(P)H oxidoreductase RTN4IP1, mitochondrial (413 aa).

The N-terminal 23 residues, Met1–Tyr23, are a transit peptide targeting the mitochondrion. A disordered region spans residues Ala27–Met52. The span at Leu31–Ala40 shows a compositional bias: polar residues. The Enoyl reductase (ER) domain occupies Gly61 to Val405. NADPH contacts are provided by Ser228, Gly230, Val231, Ser251, Tyr269, Gly353, Phe355, His398, and Arg400.

Belongs to the zinc-containing alcohol dehydrogenase family. Quinone oxidoreductase subfamily.

The protein resides in the mitochondrion matrix. The enzyme catalyses a quinone + NADH + H(+) = a quinol + NAD(+). The catalysed reaction is a quinone + NADPH + H(+) = a quinol + NADP(+). The protein operates within cofactor biosynthesis; ubiquinone biosynthesis. NAD(P)H oxidoreductase. Involved in the ubiquinone biosynthetic pathway. In Drosophila melanogaster (Fruit fly), this protein is NAD(P)H oxidoreductase RTN4IP1, mitochondrial.